A 192-amino-acid polypeptide reads, in one-letter code: Glycerol-3-phosphate acyltransferase (192 aa).

5 helical membrane-spanning segments follow: residues 5 to 25 (VVLI…ITRI), 50 to 70 (FLAA…VYIA), 78 to 98 (DFYI…PIWL), 112 to 132 (ILIA…IIVF), and 153 to 173 (SFFF…LVFL).

The protein belongs to the PlsY family. Probably interacts with PlsX.

It is found in the cell membrane. The enzyme catalyses an acyl phosphate + sn-glycerol 3-phosphate = a 1-acyl-sn-glycero-3-phosphate + phosphate. The protein operates within lipid metabolism; phospholipid metabolism. In terms of biological role, catalyzes the transfer of an acyl group from acyl-phosphate (acyl-PO(4)) to glycerol-3-phosphate (G3P) to form lysophosphatidic acid (LPA). This enzyme utilizes acyl-phosphate as fatty acyl donor, but not acyl-CoA or acyl-ACP. The polypeptide is Glycerol-3-phosphate acyltransferase (Wolbachia pipientis wMel).